An 851-amino-acid chain; its full sequence is Glycogen phosphorylase, liver form (851 aa).

The residue at position 2 (Ala2) is an N-acetylalanine. Phosphoserine; by PHK; in form phosphorylase a is present on Ser15. AMP contacts are provided by residues 43-45 (DRN), Tyr76, and Arg310. An N6-succinyllysine modification is found at Lys364. Lys470 bears the N6-acetyllysine mark. A phosphoserine mark is found at Ser524, Ser561, and Ser639. Position 681 is an N6-(pyridoxal phosphate)lysine (Lys681). Position 796 is an N6-acetyllysine (Lys796).

Belongs to the glycogen phosphorylase family. In terms of assembly, homodimer; enzymatically active. Interacts with PPP1R3B; recruits the phosphatase PP1 which dephosphorylates and inactivates PYGL/glycogen phosphorylase. It depends on pyridoxal 5'-phosphate as a cofactor. Acetylation, which is up-regulated by glucose and insulin and down-regulated by glucagon, inhibits the glycogen phosphorylase activity by promoting PPP1R3B-mediated recruitment of phosphatase PP1 and Ser-15 dephosphorylation. In terms of processing, phosphorylation at Ser-15 converts inactive phosphorylase b into active phosphorylase a. Dephosphorylation of Ser-15 by phosphatase PP1 inactivates the enzyme.

The protein localises to the cytoplasm. Its subcellular location is the cytosol. It catalyses the reaction [(1-&gt;4)-alpha-D-glucosyl](n) + phosphate = [(1-&gt;4)-alpha-D-glucosyl](n-1) + alpha-D-glucose 1-phosphate. Its activity is regulated as follows. Allosterically regulated through the non-covalent binding of metabolites, being activated by AMP and inhibited by ATP, ADP, and glucose-6-phosphate. The activity is also controlled by post-translational modifications including phosphorylation and acetylation. Its function is as follows. Allosteric enzyme that catalyzes the rate-limiting step in glycogen catabolism, the phosphorolytic cleavage of glycogen to produce glucose-1-phosphate, and plays a central role in maintaining cellular and organismal glucose homeostasis. This is Glycogen phosphorylase, liver form from Ovis aries (Sheep).